A 156-amino-acid chain; its full sequence is Sperm acrosome-associated protein 5 (156 aa).

Positions Met-1 to Ala-18 are cleaved as a signal peptide. In terms of domain architecture, C-type lysozyme spans Lys-19–Asn-147. Disulfide bonds link Cys-24-Cys-144, Cys-48-Cys-132, Cys-82-Cys-97, and Cys-93-Cys-111. Residue Glu-53 is part of the active site.

Belongs to the glycosyl hydrolase 22 family.

The protein localises to the secreted. It carries out the reaction Hydrolysis of (1-&gt;4)-beta-linkages between N-acetylmuramic acid and N-acetyl-D-glucosamine residues in a peptidoglycan and between N-acetyl-D-glucosamine residues in chitodextrins.. In Bos taurus (Bovine), this protein is Sperm acrosome-associated protein 5 (SPACA5).